The sequence spans 320 residues: Protease HtpX homolog (320 aa).

The next 2 membrane-spanning stretches (helical) occupy residues 6 to 26 (TAML…LIGG) and 28 to 48 (AGMM…YWNS). Zn(2+) is bound at residue His130. Residue Glu131 is part of the active site. His134 serves as a coordination point for Zn(2+). Helical transmembrane passes span 145-165 (ITAT…FFGG) and 173-193 (PLGF…AMLV). Residue Glu202 coordinates Zn(2+). Residues 281–320 (GGMNVSTPPVRAANPSRKSRSVPDTGLGRGGSQPPKGPWS) form a disordered region.

The protein belongs to the peptidase M48B family. Zn(2+) is required as a cofactor.

It is found in the cell inner membrane. This chain is Protease HtpX homolog, found in Rhizobium leguminosarum bv. trifolii (strain WSM2304).